The primary structure comprises 132 residues: Neurophysin 2 (132 aa).

Intrachain disulfides connect cysteine 10–cysteine 54, cysteine 13–cysteine 27, cysteine 21–cysteine 44, cysteine 28–cysteine 34, cysteine 61–cysteine 73, cysteine 67–cysteine 85, and cysteine 74–cysteine 79.

It belongs to the vasopressin/oxytocin family.

Its subcellular location is the secreted. Functionally, neurophysin 2 specifically binds vasopressin. The chain is Neurophysin 2 from Struthio camelus (Common ostrich).